The following is a 1544-amino-acid chain: Lysine-specific demethylase 5B (1544 aa).

One can recognise a JmjN domain in the interval 32–73 (CPVFEPSWEEFADPFAFIHKIRPIAEQTGICKVRPPPDWQPP). The 91-residue stretch at 97 to 187 (TRVKLNFLDQ…ILNPYNLFLS (91 aa)) folds into the ARID domain. Residues K148, K204, K209, K242, K274, and K278 each participate in a glycyl lysine isopeptide (Lys-Gly) (interchain with G-Cter in SUMO2) cross-link. Residues 201–230 (TDTKDKEYKPHDIPQRQSVQPSETCPPARR) are disordered. Over residues 202–214 (DTKDKEYKPHDIP) the composition is skewed to basic and acidic residues. A PHD-type 1 zinc finger spans residues 309–359 (LYVCLLCGSGNDEDRLLLCDGCDDSYHTFCLIPPLHDVPKGDWRCPKCLAQ). Y425 provides a ligand contact to 2-oxoglutarate. Residues 453 to 619 (EYLDSGWNLN…LGRQCVEHYR (167 aa)) enclose the JmjC domain. Fe cation contacts are provided by H499 and E501. Residues S507, N509, and K517 each coordinate 2-oxoglutarate. H587 serves as a coordination point for Fe cation. The segment at 692-744 (CVKCKTTCFMSAISCSCKPGLLVCLHHVKELCSCPPYKYKLRYRYTLDDLYPM) adopts a C5HC2 zinc-finger fold. K769 is covalently cross-linked (Glycyl lysine isopeptide (Lys-Gly) (interchain with G-Cter in SUMO2)). The residue at position 832 (K832) is an N6-acetyllysine. S986 is modified (phosphoserine). The PHD-type 2 zinc-finger motif lies at 1176-1224 (IKICLCQKAPAAPMIQCELCRDAFHTSCVAVPSISQGLRIWLCPHCRRS). S1328 carries the phosphoserine modification. The interval 1374–1400 (PSPAQQTDRSSPVRPSSEKNDCCRGKR) is disordered. A compositionally biased stretch (polar residues) spans 1376–1387 (PAQQTDRSSPVR). Basic and acidic residues predominate over residues 1389–1400 (SSEKNDCCRGKR). Residue K1450 forms a Glycyl lysine isopeptide (Lys-Gly) (interchain with G-Cter in SUMO2) linkage. Position 1456 is a phosphoserine (S1456). A PHD-type 3 zinc finger spans residues 1484–1538 (DAICPAVSCLQPEGDEVDWVQCDGSCNQWFHQVCVGVSPEMAEKEDYICVRCTVK).

This sequence belongs to the JARID1 histone demethylase family. As to quaternary structure, interacts with FOXG1B, PAX9, MYC, MYCN and RB1. Interacts with HDAC1, HDAC4, HDAC5 and HDAC7. Interacts (via PHD-type 1 zinc finger) with histone H3 unmodified at 'Lys-4'; the interaction is inhibited when histone H3 is methylated at 'Arg-2' or 'Lys-4'. The cofactor is Fe(2+). Ubiquitously expressed, with highest levels in testis. Down-regulated in melanoma and glioblastoma. Up-regulated in breast cancer (at protein level).

It is found in the nucleus. It carries out the reaction N(6),N(6),N(6)-trimethyl-L-lysyl(4)-[histone H3] + 3 2-oxoglutarate + 3 O2 = L-lysyl(4)-[histone H3] + 3 formaldehyde + 3 succinate + 3 CO2. With respect to regulation, several specific inhibitors are being developed and tested. The inhibitor KDOAM-25 inhibits its demethylase activity, resulting to cell cycle arrest in myeloma cells. Histone demethylase that demethylates 'Lys-4' of histone H3, thereby playing a central role in histone code. Does not demethylate histone H3 'Lys-9' or H3 'Lys-27'. Demethylates trimethylated, dimethylated and monomethylated H3 'Lys-4'. Acts as a transcriptional corepressor for FOXG1B and PAX9. Favors the proliferation of breast cancer cells by repressing tumor suppressor genes such as BRCA1 and HOXA5. In contrast, may act as a tumor suppressor for melanoma. Represses the CLOCK-BMAL1 heterodimer-mediated transcriptional activation of the core clock component PER2. In Homo sapiens (Human), this protein is Lysine-specific demethylase 5B (KDM5B).